A 287-amino-acid chain; its full sequence is Undecaprenyl-diphosphatase (287 aa).

Transmembrane regions (helical) follow at residues 50–70 (PGVS…IAYF), 97–117 (LGFA…GIKF), 131–151 (IPSI…AEQV), 160–180 (VVLG…LLPG), 206–226 (FLLG…DALA), 234–254 (LPLL…IDWL), and 264–284 (WLFV…WGVY).

This sequence belongs to the UppP family.

The protein resides in the cell inner membrane. The enzyme catalyses di-trans,octa-cis-undecaprenyl diphosphate + H2O = di-trans,octa-cis-undecaprenyl phosphate + phosphate + H(+). Catalyzes the dephosphorylation of undecaprenyl diphosphate (UPP). Confers resistance to bacitracin. This chain is Undecaprenyl-diphosphatase, found in Synechococcus sp. (strain CC9605).